The following is a 344-amino-acid chain: L-rhamnose-proton symporter (344 aa).

Transmembrane regions (helical) follow at residues 4–24, 38–58, 68–88, 101–121, 137–157, 175–195, 214–234, 259–279, 290–310, and 323–343; these read AITM…CFYA, WSVG…ALLL, FSLS…IGNI, MGIG…TPII, TLLG…AGQL, LVLA…MNAA, LPSY…FCFI, VLLS…YAWG, ISWM…GLVL, and VLSL…IGMA.

The protein belongs to the L-rhamnose transporter (TC 2.A.7.6) family.

Its subcellular location is the cell inner membrane. The catalysed reaction is L-rhamnopyranose(in) + H(+)(in) = L-rhamnopyranose(out) + H(+)(out). Uptake of L-rhamnose across the cytoplasmic membrane with the concomitant transport of protons into the cell (symport system). This chain is L-rhamnose-proton symporter, found in Escherichia coli O9:H4 (strain HS).